A 112-amino-acid chain; its full sequence is C-C motif chemokine 27 (112 aa).

Residues 1-24 (MKGPPTFCSLLLLSLLLSPDPTAA) form the signal peptide. 2 disulfide bridges follow: Cys33/Cys62 and Cys34/Cys77.

This sequence belongs to the intercrine beta (chemokine CC) family. As to quaternary structure, monomer, dimer, and tetramer. Heparin avidly promotes oligomerization. Interacts with TNFAIP6 (via Link domain). As to expression, testis, thymus, placenta, ovary and skin.

The protein resides in the secreted. In terms of biological role, chemotactic factor that attracts skin-associated memory T-lymphocytes. May play a role in mediating homing of lymphocytes to cutaneous sites. Binds to CCR10. This Homo sapiens (Human) protein is C-C motif chemokine 27 (CCL27).